We begin with the raw amino-acid sequence, 1375 residues long: uncharacterized protein (1375 aa).

A Helicase ATP-binding domain is found at 277–476 (LLASGDIRGG…FGLLFLLRYS (200 aa)). 290–297 (DEMGMGKT) provides a ligand contact to ATP. Residues 1092 to 1130 (CIICRDIIKQGFITTCGHLYCSFCLEAWLKHSSSCPMCK) form an RING-type zinc finger. Positions 1190-1336 (TISKHLLYLK…QLDKLGLDVP (147 aa)) constitute a Helicase C-terminal domain.

Belongs to the SNF2/RAD54 helicase family.

The protein resides in the nucleus. This is an uncharacterized protein from Schizosaccharomyces pombe (strain 972 / ATCC 24843) (Fission yeast).